Here is a 193-residue protein sequence, read N- to C-terminus: Molybdopterin synthase catalytic subunit (193 aa).

Substrate is bound by residues 118 to 119, Lys134, and 141 to 143; these read HR and KKE. The disordered stretch occupies residues 159-193; it reads DRTTTDGTTASSPAPATRPAKGGGCCGRKVRVNES. Low complexity predominate over residues 163–178; that stretch reads TDGTTASSPAPATRPA.

Belongs to the MoaE family. MOCS2B subfamily. Heterotetramer; composed of 2 small (MOCS2A) and 2 large (MOCS2B) subunits.

It localises to the cytoplasm. The catalysed reaction is 2 [molybdopterin-synthase sulfur-carrier protein]-C-terminal-Gly-aminoethanethioate + cyclic pyranopterin phosphate + H2O = molybdopterin + 2 [molybdopterin-synthase sulfur-carrier protein]-C-terminal Gly-Gly + 2 H(+). It participates in cofactor biosynthesis; molybdopterin biosynthesis. Catalytic subunit of the molybdopterin synthase complex, a complex that catalyzes the conversion of precursor Z into molybdopterin. Acts by mediating the incorporation of 2 sulfur atoms from thiocarboxylated MOCS2A into precursor Z to generate a dithiolene group. The protein is Molybdopterin synthase catalytic subunit of Oryza sativa subsp. japonica (Rice).